A 366-amino-acid polypeptide reads, in one-letter code: Homer protein homolog 1 (366 aa).

Gly2 carries the post-translational modification N-acetylglycine. The WH1 domain maps to 2–110 (GEQPIFSTRA…EKFQEFKEAA (109 aa)). Positions 114-189 (KEKSQEKMEL…RTQALSHASS (76 aa)) are disordered. 2 stretches are compositionally biased toward polar residues: residues 138 to 147 (SPLTPESING) and 155 to 170 (DVTQ…TQNA). Residues 193 to 364 (KHWEAELATL…LRDNLAKLLE (172 aa)) adopt a coiled-coil conformation. Residues 302–366 (KLQEVEIRNK…DNLAKLLECS (65 aa)) are required for tetramerization. Phosphoserine is present on Ser318.

It belongs to the Homer family. As to quaternary structure, tetramer; this tetrameric structure is critical for forming the high-order complex with SHANK1, which in turn is necessary for the structural and functional integrity of dendritic spines. Isoform 1, isoform 2 and isoform 3 encode a coiled-coil structure that mediates homo- and heteromultimerization. Interacts with GRM1, GRM5, ITPR1, DNM3, RYR1, RYR2 and SHANK3. Interacts with IFT57 and OPHN1. Interacts with SHANK1; forms high-order polymerized complex with a mesh-like network structure, at least composed of SHANK1, HOMER1 and DLGAP1; the complex formation is SHANK1 multimerization dependent. Interacts with NFATC4. Interacts with DAGLA (via PPXXF motif); this interaction is required for the cell membrane localization of DAGLA. Interacts with SRGAP2. As to expression, expressed in skeletal muscle at the level of the Z line, in the forebrain and cerebellum. Expressed in cardiac and skeletal muscle. In terms of tissue distribution, expressed in the hippocampus. As to expression, expressed in skeletal muscle at the level of the Z line, in the heart, forebrain and cerebellum.

The protein localises to the cytoplasm. It localises to the postsynaptic density. Its subcellular location is the synapse. It is found in the cell projection. The protein resides in the dendritic spine. In terms of biological role, postsynaptic density scaffolding protein. Binds and cross-links cytoplasmic regions of GRM1, GRM5, ITPR1, DNM3, RYR1, RYR2, SHANK1 and SHANK3. By physically linking GRM1 and GRM5 with ER-associated ITPR1 receptors, it aids the coupling of surface receptors to intracellular calcium release. May also couple GRM1 to PI3 kinase through its interaction with AGAP2. Isoform 1 regulates the trafficking and surface expression of GRM5. Differentially regulates the functions of the calcium activated channel ryanodine receptors RYR1 and RYR2. Isoform 1 decreases the activity of RYR2, and increases the activity of RYR1, whereas isoform 5 counteracts the effects by competing for binding sites. Isoform 3 regulates the trafficking and surface expression of GRM5. Isoform 5 acts as a natural dominant negative, in dynamic competition with constitutively expressed isoform 1, isoform 2 and isoform 3 to regulate synaptic metabotropic glutamate function. Isoform 5, may be involved in the structural changes that occur at synapses during long-lasting neuronal plasticity and development. Forms a high-order complex with SHANK1, which in turn is necessary for the structural and functional integrity of dendritic spines. Negatively regulates T cell activation by inhibiting the calcineurin-NFAT pathway. Acts by competing with calcineurin/PPP3CA for NFAT protein binding, hence preventing NFAT activation by PPP3CA. The chain is Homer protein homolog 1 from Mus musculus (Mouse).